The following is a 147-amino-acid chain: Globin, polymeric component P3 (147 aa).

The Globin domain maps to 2 to 146 (HLTADQVAAL…ISDALIAGLE (145 aa)). Residue histidine 96 participates in heme b binding.

The protein belongs to the globin family. Polymer.

This is Globin, polymeric component P3 from Glycera dibranchiata (Bloodworm).